The primary structure comprises 517 residues: MARAWGLLLAIGVVLPTWLSSTKVSSLIERISDPKDLKKLLRTRNNVLVLYSESEVAAESHLKLLSTVAQAVKGQGTVCWVDCGDAESRKLCKKMKVDLSPKDKKIELFHYQDGAFHMQYDRAVTLKSIVAFLKDPKGPPLWEEDPGAKDVVHIDSEKDFRRLLKREEKPLLMMFYAPWCSMCKRIMPHFQKAATQVRGHIVLAGMNVYPSEFENIKEEYNVRGYPTICYFEKGRFLFPYENYGSTAEDIVEWLKNPLPPQPQVPETPWADEGGSVYHLTDEDFDQFVKEHSSVLVMFHAPWCGHCKKMKPEFESAAEVLHGDAESSGVLAAVDATVNEALAGRFHISAFPTLKYFKNGEQQAVPALRTKKKFIEWMQNPEAPPPPEPTWEEQQTSVLHLVGDNFRDTLKKKKHTLVMFYAPWCPHCKKVIPHFTATADAFKEDRKIACAAVDCVKDKNQDLCQQEAVKAYPTFHYYHYGKLVEKYESDRTELGFTSFIRTLREGDLKRLEKRREEL.

The N-terminal stretch at 1–21 (MARAWGLLLAIGVVLPTWLSS) is a signal peptide. Disulfide bonds link Cys83-Cys92, Cys180-Cys183, Cys303-Cys306, and Cys424-Cys427. Thioredoxin domains are found at residues 132 to 259 (FLKD…NPLP), 268 to 382 (PWAD…NPEA), and 376 to 504 (WMQN…TLRE). Positions 514–517 (REEL) match the Prevents secretion from ER motif.

Belongs to the protein disulfide isomerase family. As to quaternary structure, interacts with CALR (via P-domain).

It localises to the endoplasmic reticulum lumen. It catalyses the reaction Catalyzes the rearrangement of -S-S- bonds in proteins.. In Mus musculus (Mouse), this protein is Protein disulfide-isomerase A5 (Pdia5).